We begin with the raw amino-acid sequence, 177 residues long: NAD(P)H-quinone oxidoreductase subunit 6, chloroplastic (177 aa).

The next 5 membrane-spanning stretches (helical) occupy residues 10–30 (VLLVFLGSGLILGGLGVVLLT), 32–52 (PIYSAFSLGLVLVCISLFYIL), 61–81 (AQLLIYVGAVNVLIIFAVMFM), 90–112 (FYLWTVGDGVTSLVCTSILFSLI), and 152–172 (FYLPFELVSIILLVALIGAIT).

The protein belongs to the complex I subunit 6 family. As to quaternary structure, NDH is composed of at least 16 different subunits, 5 of which are encoded in the nucleus.

The protein resides in the plastid. The protein localises to the chloroplast thylakoid membrane. The catalysed reaction is a plastoquinone + NADH + (n+1) H(+)(in) = a plastoquinol + NAD(+) + n H(+)(out). The enzyme catalyses a plastoquinone + NADPH + (n+1) H(+)(in) = a plastoquinol + NADP(+) + n H(+)(out). Functionally, NDH shuttles electrons from NAD(P)H:plastoquinone, via FMN and iron-sulfur (Fe-S) centers, to quinones in the photosynthetic chain and possibly in a chloroplast respiratory chain. The immediate electron acceptor for the enzyme in this species is believed to be plastoquinone. Couples the redox reaction to proton translocation, and thus conserves the redox energy in a proton gradient. This Acorus calamus var. americanus (American sweet flag) protein is NAD(P)H-quinone oxidoreductase subunit 6, chloroplastic (ndhG).